Here is a 549-residue protein sequence, read N- to C-terminus: Glucose-6-phosphate isomerase (549 aa).

Glu-352 functions as the Proton donor in the catalytic mechanism. Active-site residues include His-383 and Lys-511.

This sequence belongs to the GPI family.

The protein localises to the cytoplasm. It catalyses the reaction alpha-D-glucose 6-phosphate = beta-D-fructose 6-phosphate. The protein operates within carbohydrate biosynthesis; gluconeogenesis. Its pathway is carbohydrate degradation; glycolysis; D-glyceraldehyde 3-phosphate and glycerone phosphate from D-glucose: step 2/4. In terms of biological role, catalyzes the reversible isomerization of glucose-6-phosphate to fructose-6-phosphate. The polypeptide is Glucose-6-phosphate isomerase (Methylocella silvestris (strain DSM 15510 / CIP 108128 / LMG 27833 / NCIMB 13906 / BL2)).